Reading from the N-terminus, the 564-residue chain is NAD-dependent malic enzyme (564 aa).

Tyr104 serves as the catalytic Proton donor. Residue Arg157 participates in NAD(+) binding. The active-site Proton acceptor is the Lys175. Residues Glu246, Asp247, and Asp270 each contribute to the a divalent metal cation site. 2 residues coordinate NAD(+): Asp270 and Asn417.

This sequence belongs to the malic enzymes family. As to quaternary structure, homotetramer. It depends on Mg(2+) as a cofactor. Requires Mn(2+) as cofactor.

It catalyses the reaction (S)-malate + NAD(+) = pyruvate + CO2 + NADH. The enzyme catalyses oxaloacetate + H(+) = pyruvate + CO2. This is NAD-dependent malic enzyme from Aeromonas salmonicida (strain A449).